A 181-amino-acid chain; its full sequence is Ferritin BfrB (181 aa).

In terms of domain architecture, Ferritin-like diiron spans methionine 15 to glycine 150. 5 residues coordinate Fe cation: glutamate 22, glutamate 55, histidine 58, glutamate 99, and glutamine 132.

This sequence belongs to the ferritin family. Prokaryotic subfamily. In terms of assembly, homooligomer of 24 subunits that are packed together to form an approximately spherical molecule with a central cavity, in which large amounts of iron can be stored.

It catalyses the reaction 4 Fe(2+) + O2 + 4 H(+) = 4 Fe(3+) + 2 H2O. In terms of biological role, iron-storage protein that displays ferroxidase activity, catalyzing the oxidation of Fe(2+) ions into Fe(3+) ions, that can then be deposited as a ferric-oxide mineral core within the central cavity of the protein complex. The protein is Ferritin BfrB (bfrB) of Mycobacterium tuberculosis (strain ATCC 35801 / TMC 107 / Erdman).